The following is a 190-amino-acid chain: Elongation factor P (190 aa).

Lys-34 is subject to N6-(3,6-diaminohexanoyl)-5-hydroxylysine.

It belongs to the elongation factor P family. May be beta-lysylated on the epsilon-amino group of Lys-34 by the combined action of EpmA and EpmB, and then hydroxylated on the C5 position of the same residue by EpmC (if this protein is present). Lysylation is critical for the stimulatory effect of EF-P on peptide-bond formation. The lysylation moiety may extend toward the peptidyltransferase center and stabilize the terminal 3-CCA end of the tRNA. Hydroxylation of the C5 position on Lys-34 may allow additional potential stabilizing hydrogen-bond interactions with the P-tRNA.

The protein localises to the cytoplasm. The protein operates within protein biosynthesis; polypeptide chain elongation. Its function is as follows. Involved in peptide bond synthesis. Alleviates ribosome stalling that occurs when 3 or more consecutive Pro residues or the sequence PPG is present in a protein, possibly by augmenting the peptidyl transferase activity of the ribosome. Modification of Lys-34 is required for alleviation. This is Elongation factor P from Psychrobacter cryohalolentis (strain ATCC BAA-1226 / DSM 17306 / VKM B-2378 / K5).